Here is a 289-residue protein sequence, read N- to C-terminus: 4-diphosphocytidyl-2-C-methyl-D-erythritol kinase (289 aa).

Residue lysine 11 is part of the active site. Proline 95 to serine 105 serves as a coordination point for ATP. Aspartate 137 is a catalytic residue.

The protein belongs to the GHMP kinase family. IspE subfamily.

The catalysed reaction is 4-CDP-2-C-methyl-D-erythritol + ATP = 4-CDP-2-C-methyl-D-erythritol 2-phosphate + ADP + H(+). It functions in the pathway isoprenoid biosynthesis; isopentenyl diphosphate biosynthesis via DXP pathway; isopentenyl diphosphate from 1-deoxy-D-xylulose 5-phosphate: step 3/6. Its function is as follows. Catalyzes the phosphorylation of the position 2 hydroxy group of 4-diphosphocytidyl-2C-methyl-D-erythritol. The polypeptide is 4-diphosphocytidyl-2-C-methyl-D-erythritol kinase (Aeromonas salmonicida (strain A449)).